Consider the following 307-residue polypeptide: uncharacterized protein (307 aa).

An EAL domain is found at 54–307 (RHYLSTSMRV…KALPVDFFRE (254 aa)). The next 2 helical transmembrane spans lie at 158–178 (PGFL…AHAL) and 203–223 (ALGV…LAYL).

It localises to the cell membrane. This is an uncharacterized protein from Mycobacterium tuberculosis (strain CDC 1551 / Oshkosh).